The primary structure comprises 51 residues: ATP synthase F(1) complex subunit epsilon, mitochondrial (51 aa).

3 positions are modified to N6-acetyllysine; alternate: Lys-21, Lys-32, and Lys-37. N6-succinyllysine; alternate occurs at positions 21, 32, and 37. The residue at position 44 (Lys-44) is an N6-acetyllysine.

This sequence belongs to the eukaryotic ATPase epsilon family. In terms of assembly, component of the ATP synthase complex composed at least of ATP5F1A/subunit alpha, ATP5F1B/subunit beta, ATP5MC1/subunit c (homooctomer), MT-ATP6/subunit a, MT-ATP8/subunit 8, ATP5ME/subunit e, ATP5MF/subunit f, ATP5MG/subunit g, ATP5MK/subunit k, ATP5MJ/subunit j, ATP5F1C/subunit gamma, ATP5F1D/subunit delta, ATP5F1E/subunit epsilon, ATP5PF/subunit F6, ATP5PB/subunit b, ATP5PD/subunit d, ATP5PO/subunit OSCP. ATP synthase complex consists of a soluble F(1) head domain (subunits alpha(3) and beta(3)) - the catalytic core - and a membrane F(0) domain - the membrane proton channel (subunits c, a, 8, e, f, g, k and j). These two domains are linked by a central stalk (subunits gamma, delta, and epsilon) rotating inside the F1 region and a stationary peripheral stalk (subunits F6, b, d, and OSCP).

It localises to the mitochondrion. The protein localises to the mitochondrion inner membrane. Its function is as follows. Subunit epsilon, of the mitochondrial membrane ATP synthase complex (F(1)F(0) ATP synthase or Complex V) that produces ATP from ADP in the presence of a proton gradient across the membrane which is generated by electron transport complexes of the respiratory chain. ATP synthase complex consist of a soluble F(1) head domain - the catalytic core - and a membrane F(1) domain - the membrane proton channel. These two domains are linked by a central stalk rotating inside the F(1) region and a stationary peripheral stalk. During catalysis, ATP synthesis in the catalytic domain of F(1) is coupled via a rotary mechanism of the central stalk subunits to proton translocation. In vivo, can only synthesize ATP although its ATP hydrolase activity can be activated artificially in vitro. May be essential for the assembly of F(1) and may play an important role in the incorporation of the hydrophobic subunit c into the F(1)-c oligomer rotor of the mitochondrial ATP synthase complex. The sequence is that of ATP synthase F(1) complex subunit epsilon, mitochondrial from Bos taurus (Bovine).